Here is a 421-residue protein sequence, read N- to C-terminus: ATP-dependent RNA helicase RhlB (421 aa).

The short motif at 9-37 is the Q motif element; it reads QKFSDFALHPKVVEVLEKKGFHNCTPIQA. Residues 40 to 219 enclose the Helicase ATP-binding domain; sequence LPLTLAGRDV…FEQMNNAEYI (180 aa). 53–60 provides a ligand contact to ATP; that stretch reads AQTGTGKT. The DEAD box signature appears at 165–168; sequence DEAD. The region spanning 245–390 is the Helicase C-terminal domain; the sequence is RLLQTLIEEE…VSKYNPDALM (146 aa). The segment at 392 to 421 is disordered; the sequence is DLPKPLRLTRPRTGNGPRRTGAPRNRRRSG. Over residues 402–414 the composition is skewed to low complexity; that stretch reads PRTGNGPRRTGAP.

The protein belongs to the DEAD box helicase family. RhlB subfamily. As to quaternary structure, component of the RNA degradosome, which is a multiprotein complex involved in RNA processing and mRNA degradation.

The protein localises to the cytoplasm. The catalysed reaction is ATP + H2O = ADP + phosphate + H(+). In terms of biological role, DEAD-box RNA helicase involved in RNA degradation. Has RNA-dependent ATPase activity and unwinds double-stranded RNA. This chain is ATP-dependent RNA helicase RhlB, found in Shigella boydii serotype 18 (strain CDC 3083-94 / BS512).